Here is a 127-residue protein sequence, read N- to C-terminus: Fluoride-specific ion channel FluC (127 aa).

4 helical membrane passes run 4–24 (SLLVIAIGASLGAWLRWLLGM), 37–57 (TVVANMVGGYIIGLAIAFLAA), 68–88 (LIITGFCGGLTTFSTFSAETV), and 96–116 (LLWALGSISLHVVGSLAMTAA). Residues Gly75 and Thr78 each coordinate Na(+).

The protein belongs to the fluoride channel Fluc/FEX (TC 1.A.43) family.

It localises to the cell inner membrane. It catalyses the reaction fluoride(in) = fluoride(out). With respect to regulation, na(+) is not transported, but it plays an essential structural role and its presence is essential for fluoride channel function. Its function is as follows. Fluoride-specific ion channel. Important for reducing fluoride concentration in the cell, thus reducing its toxicity. The polypeptide is Fluoride-specific ion channel FluC (Pseudomonas syringae pv. maculicola).